A 527-amino-acid polypeptide reads, in one-letter code: EGF domain-specific O-linked N-acetylglucosamine transferase (527 aa).

Residues 1-17 form the signal peptide; it reads MFMLLVFGALLPEVPLS. Residues 295 to 297 carry the Required for optimal activity motif; that stretch reads DYD. The N-linked (GlcNAc...) asparagine glycan is linked to Asn-354. The Prevents secretion from ER signature appears at 524–527; sequence HDEL.

Belongs to the glycosyltransferase 61 family.

The protein localises to the endoplasmic reticulum lumen. The enzyme catalyses L-seryl-[protein] + UDP-N-acetyl-alpha-D-glucosamine = 3-O-(N-acetyl-beta-D-glucosaminyl)-L-seryl-[protein] + UDP + H(+). It catalyses the reaction L-threonyl-[protein] + UDP-N-acetyl-alpha-D-glucosamine = 3-O-(N-acetyl-beta-D-glucosaminyl)-L-threonyl-[protein] + UDP + H(+). Catalyzes the transfer of a single N-acetylglucosamine from UDP-GlcNAc to a serine or threonine residue in extracellular proteins resulting in their modification with a beta-linked N-acetylglucosamine (O-GlcNAc). Specifically glycosylates the Thr residue located between the fifth and sixth conserved cysteines of folded EGF-like domains. The sequence is that of EGF domain-specific O-linked N-acetylglucosamine transferase (EOGT) from Bos taurus (Bovine).